The following is a 44-amino-acid chain: Photosystem I reaction center subunit IX (44 aa).

Residues 9-29 (WFRSAPVVATIWIVLTAGILV) traverse the membrane as a helical segment.

The protein belongs to the PsaJ family.

The protein localises to the cellular thylakoid membrane. Functionally, may help in the organization of the PsaE and PsaF subunits. In Prochlorococcus marinus (strain MIT 9211), this protein is Photosystem I reaction center subunit IX.